A 211-amino-acid chain; its full sequence is tRNA (guanine-N(7)-)-methyltransferase (211 aa).

S-adenosyl-L-methionine-binding residues include aspartate 40, glutamate 65, asparagine 92, and aspartate 118. Aspartate 118 is a catalytic residue. 2 residues coordinate substrate: lysine 122 and aspartate 154.

Belongs to the class I-like SAM-binding methyltransferase superfamily. TrmB family.

The enzyme catalyses guanosine(46) in tRNA + S-adenosyl-L-methionine = N(7)-methylguanosine(46) in tRNA + S-adenosyl-L-homocysteine. Its pathway is tRNA modification; N(7)-methylguanine-tRNA biosynthesis. Catalyzes the formation of N(7)-methylguanine at position 46 (m7G46) in tRNA. This is tRNA (guanine-N(7)-)-methyltransferase from Microcystis aeruginosa (strain NIES-843 / IAM M-2473).